A 464-amino-acid polypeptide reads, in one-letter code: Asparagine--tRNA ligase (464 aa).

This sequence belongs to the class-II aminoacyl-tRNA synthetase family. In terms of assembly, homodimer.

The protein localises to the cytoplasm. The enzyme catalyses tRNA(Asn) + L-asparagine + ATP = L-asparaginyl-tRNA(Asn) + AMP + diphosphate + H(+). The chain is Asparagine--tRNA ligase from Clostridium beijerinckii (strain ATCC 51743 / NCIMB 8052) (Clostridium acetobutylicum).